The following is a 930-amino-acid chain: GPI ethanolamine phosphate transferase 1 (930 aa).

The Cytoplasmic portion of the chain corresponds to 1–8 (MARLGRTG). Residues 9-29 (FLTLAVVFHLIYAYSIFDIYF) traverse the membrane as a helical segment. The Lumenal portion of the chain corresponds to 30 to 466 (VSPIVSGMRP…LQTYDWLFLR (437 aa)). Asn-148 carries N-linked (GlcNAc...) asparagine glycosylation. A helical transmembrane segment spans residues 467-487 (TIVTFGYVGWIAYALTTVIHL). Residues 488 to 498 (HVLHGASESDR) lie on the Cytoplasmic side of the membrane. A helical membrane pass occupies residues 499-519 (TTASISFFSSVLVALFSVFLY). Residues 520 to 521 (QG) lie on the Lumenal side of the membrane. Residues 522 to 542 (SPWRYYLYGFFPIFFWEEVFA) form a helical membrane-spanning segment. Residues 543-569 (RRKAFHAGRAGALLLPKRDLHSNKVED) are Cytoplasmic-facing. A helical membrane pass occupies residues 570–590 (IDTITYGGAFMLLTGLLYLLF). Residues 591 to 611 (EDEILGTSHQPAAVSRKGSRN) lie on the Lumenal side of the membrane. A helical transmembrane segment spans residues 612-632 (IMGLQLGMVLLALIVTRSSAA). Over 633–639 (SLQAKQG) the chain is Cytoplasmic. The chain crosses the membrane as a helical span at residues 640 to 660 (LPFGNQVVGWGVLIASLLLPF). Residues 661–684 (AHRLYPNSHYLHRLMIIFLTFSPT) lie on the Lumenal side of the membrane. Residues 685-705 (FIILTISYEGLFYFAFCMTLV) form a helical membrane-spanning segment. Topologically, residues 706 to 761 (TWVRLEHATYVYTAKPVAKQAQETIEPPKKANPGATTVVDGETYRFRTLTVSDARV) are cytoplasmic. Residues 762-782 (ALFFFFLLQSAFFSTGNIASI) traverse the membrane as a helical segment. At 783 to 803 (SSFSLDSVYRLIPVFNPFSQG) the chain is on the lumenal side. The chain crosses the membrane as a helical span at residues 804–824 (ALLILKLLIPFAIISANLGIL). The Cytoplasmic portion of the chain corresponds to 825–833 (NRRLEVAPS). Residues 834 to 854 (ALFMVVMAISDVMTLNFFYMV) traverse the membrane as a helical segment. The Lumenal portion of the chain corresponds to 855 to 870 (RDEGSWLDIGTTISHF). Residues 871–891 (CIASFLCTFVAGLEFLSEVFI) traverse the membrane as a helical segment. The Cytoplasmic portion of the chain corresponds to 892–930 (SGVDFGLRTDAITASVPDIVNGITSKGQKDVPNGVEDKE).

The protein belongs to the PIGG/PIGN/PIGO family. PIGN subfamily.

The protein localises to the endoplasmic reticulum membrane. The protein operates within glycolipid biosynthesis; glycosylphosphatidylinositol-anchor biosynthesis. In terms of biological role, ethanolamine phosphate transferase involved in glycosylphosphatidylinositol-anchor biosynthesis. Transfers ethanolamine phosphate to the first alpha-1,4-linked mannose of the glycosylphosphatidylinositol precursor of GPI-anchor. The polypeptide is GPI ethanolamine phosphate transferase 1 (mcd4) (Emericella nidulans (strain FGSC A4 / ATCC 38163 / CBS 112.46 / NRRL 194 / M139) (Aspergillus nidulans)).